We begin with the raw amino-acid sequence, 229 residues long: Large ribosomal subunit protein uL1 (229 aa).

Belongs to the universal ribosomal protein uL1 family. Part of the 50S ribosomal subunit.

Its function is as follows. Binds directly to 23S rRNA. The L1 stalk is quite mobile in the ribosome, and is involved in E site tRNA release. In terms of biological role, protein L1 is also a translational repressor protein, it controls the translation of the L11 operon by binding to its mRNA. This is Large ribosomal subunit protein uL1 from Clostridium beijerinckii (strain ATCC 51743 / NCIMB 8052) (Clostridium acetobutylicum).